Here is a 78-residue protein sequence, read N- to C-terminus: MSRVCQVSGKRVQTGNNVSHANNRTRRRFLPNLHERRFWVASENRWVKLRVSAHALRTIDKNGIDAVLKELRARGEKV.

The segment at 1 to 23 (MSRVCQVSGKRVQTGNNVSHANN) is disordered. Polar residues predominate over residues 11 to 22 (RVQTGNNVSHAN).

Belongs to the bacterial ribosomal protein bL28 family.

This Xanthomonas campestris pv. campestris (strain 8004) protein is Large ribosomal subunit protein bL28.